Here is a 643-residue protein sequence, read N- to C-terminus: Pescadillo homolog (643 aa).

Positions 319-412 (KLKTLFKGLK…RLLPTNKYFM (94 aa)) constitute a BRCT domain. Disordered regions lie at residues 437–475 (AARKAAEGEEEEETFEPAEVNADHEHISDDEEVQDPENE), 492–571 (TDSL…YREN), and 609–643 (DKNARLLANKRERIEKQKRAEQMEKQKQQRKQILA). The segment covering 464 to 475 (SDDEEVQDPENE) has biased composition (acidic residues). Basic and acidic residues predominate over residues 492–518 (TDSLNSGKKEGADDATDNGKDAAEKKQ). The segment covering 524 to 544 (GESDDEDEEEEDDDDGEEEED) has biased composition (acidic residues). Positions 569–643 (RENEAEKKIV…QKQQRKQILA (75 aa)) form a coiled coil. Positions 609 to 635 (DKNARLLANKRERIEKQKRAEQMEKQK) are enriched in basic and acidic residues.

Belongs to the pescadillo family.

Its subcellular location is the nucleus. The protein localises to the nucleolus. The protein resides in the nucleoplasm. Required for maturation of ribosomal RNAs and formation of the large ribosomal subunit. This Anopheles gambiae (African malaria mosquito) protein is Pescadillo homolog.